The sequence spans 378 residues: Erythronate-4-phosphate dehydrogenase (378 aa).

Residues serine 45 and threonine 66 each coordinate substrate. Aspartate 146 and threonine 175 together coordinate NAD(+). Arginine 208 is a catalytic residue. Aspartate 232 is a binding site for NAD(+). Glutamate 237 is a catalytic residue. Histidine 254 acts as the Proton donor in catalysis. An NAD(+)-binding site is contributed by glycine 257. Residue tyrosine 258 coordinates substrate.

The protein belongs to the D-isomer specific 2-hydroxyacid dehydrogenase family. PdxB subfamily. In terms of assembly, homodimer.

The protein resides in the cytoplasm. The catalysed reaction is 4-phospho-D-erythronate + NAD(+) = (R)-3-hydroxy-2-oxo-4-phosphooxybutanoate + NADH + H(+). Its pathway is cofactor biosynthesis; pyridoxine 5'-phosphate biosynthesis; pyridoxine 5'-phosphate from D-erythrose 4-phosphate: step 2/5. Functionally, catalyzes the oxidation of erythronate-4-phosphate to 3-hydroxy-2-oxo-4-phosphonooxybutanoate. This Salmonella dublin (strain CT_02021853) protein is Erythronate-4-phosphate dehydrogenase.